Here is a 96-residue protein sequence, read N- to C-terminus: Co-chaperonin GroES (96 aa).

The protein belongs to the GroES chaperonin family. In terms of assembly, heptamer of 7 subunits arranged in a ring. Interacts with the chaperonin GroEL.

It localises to the cytoplasm. Its function is as follows. Together with the chaperonin GroEL, plays an essential role in assisting protein folding. The GroEL-GroES system forms a nano-cage that allows encapsulation of the non-native substrate proteins and provides a physical environment optimized to promote and accelerate protein folding. GroES binds to the apical surface of the GroEL ring, thereby capping the opening of the GroEL channel. This is Co-chaperonin GroES from Neisseria meningitidis serogroup A / serotype 4A (strain DSM 15465 / Z2491).